Reading from the N-terminus, the 263-residue chain is UPF0758 protein Pden_2304 (263 aa).

Positions 141–263 constitute an MPN domain; it reads VLTSWDALLD…ELSFRSEGLL (123 aa). Residues histidine 212, histidine 214, and aspartate 225 each contribute to the Zn(2+) site. Positions 212-225 match the JAMM motif motif; it reads HNHPSGDPTPSQAD.

It belongs to the UPF0758 family.

The polypeptide is UPF0758 protein Pden_2304 (Paracoccus denitrificans (strain Pd 1222)).